The chain runs to 125 residues: Holo-[acyl-carrier-protein] synthase (125 aa).

Residues Asp8 and Glu55 each coordinate Mg(2+).

Belongs to the P-Pant transferase superfamily. AcpS family. The cofactor is Mg(2+).

Its subcellular location is the cytoplasm. It catalyses the reaction apo-[ACP] + CoA = holo-[ACP] + adenosine 3',5'-bisphosphate + H(+). Functionally, transfers the 4'-phosphopantetheine moiety from coenzyme A to a Ser of acyl-carrier-protein. The sequence is that of Holo-[acyl-carrier-protein] synthase from Treponema pallidum (strain Nichols).